The chain runs to 694 residues: Polynucleotide 3'-phosphatase ZDP (694 aa).

2 PARP-type zinc fingers span residues 50 to 132 and 165 to 247; these read VVAE…EQCG and VIAD…EVNK. Residues Cys62, Cys65, His93, Cys96, Cys177, Cys180, His208, and Cys211 each contribute to the Zn(2+) site. Residues 266-331 are disordered; sequence AIADNELTEE…SPDSSKVISE (66 aa). Over residues 302–321 the composition is skewed to basic and acidic residues; the sequence is ESKKPASDEISEQKTKDVKN. Residues 322-331 are compositionally biased toward polar residues; sequence SPDSSKVISE. The PARP-type 3 zinc-finger motif lies at 328–410; sequence VISEYAKSSR…ALKELVQQCG (83 aa). The Zn(2+) site is built by Cys340, Cys343, His371, and Cys374.

It in the C-terminal section; belongs to the DNA 3' phosphatase family. Interacts with ROS1 (via the central region). Binds to XRCC1.

It is found in the nucleus. The protein localises to the nucleoplasm. The catalysed reaction is a 3'end (2'-deoxyribonucleotide 3'-phosphate)-DNA + H2O = a 3'-end 2'-deoxyribonucleotide-DNA + phosphate. With respect to regulation, activated by the presence of DNA. Stimulated by XRCC1. Functionally, nick-sensing 3'-phosphoesterase involved in a base excision repair pathway required for active DNA demethylation. The N-terminal DNA-binding domain binds specifically to gap sites and sharply bends the target DNA. Lacks 5'-kinase activity but is capable of 3'-phosphoglycolate end processing. Inactive on 3'-alpha,beta-unsaturated aldehyde (3'-dRP). Protects partially genes from transcriptional silencing by preventing promoter DNA hypermethylation. The polypeptide is Polynucleotide 3'-phosphatase ZDP (ZDP) (Arabidopsis thaliana (Mouse-ear cress)).